The sequence spans 697 residues: Phosphoribosylformylglycinamidine synthase subunit PurL (697 aa).

Residue histidine 34 is part of the active site. The ATP site is built by tyrosine 37 and lysine 76. Glutamate 78 is a Mg(2+) binding site. Residues 79 to 82 and arginine 101 each bind substrate; that span reads SHNH. Histidine 80 functions as the Proton acceptor in the catalytic mechanism. Aspartate 102 lines the Mg(2+) pocket. Substrate is bound at residue glutamine 224. Aspartate 250 contributes to the Mg(2+) binding site. 294–296 provides a ligand contact to substrate; that stretch reads ETQ. The ATP site is built by aspartate 472 and glycine 509. Position 512 (serine 512) interacts with substrate.

The protein belongs to the FGAMS family. As to quaternary structure, monomer. Part of the FGAM synthase complex composed of 1 PurL, 1 PurQ and 2 PurS subunits.

It localises to the cytoplasm. The enzyme catalyses N(2)-formyl-N(1)-(5-phospho-beta-D-ribosyl)glycinamide + L-glutamine + ATP + H2O = 2-formamido-N(1)-(5-O-phospho-beta-D-ribosyl)acetamidine + L-glutamate + ADP + phosphate + H(+). It participates in purine metabolism; IMP biosynthesis via de novo pathway; 5-amino-1-(5-phospho-D-ribosyl)imidazole from N(2)-formyl-N(1)-(5-phospho-D-ribosyl)glycinamide: step 1/2. Its function is as follows. Part of the phosphoribosylformylglycinamidine synthase complex involved in the purines biosynthetic pathway. Catalyzes the ATP-dependent conversion of formylglycinamide ribonucleotide (FGAR) and glutamine to yield formylglycinamidine ribonucleotide (FGAM) and glutamate. The FGAM synthase complex is composed of three subunits. PurQ produces an ammonia molecule by converting glutamine to glutamate. PurL transfers the ammonia molecule to FGAR to form FGAM in an ATP-dependent manner. PurS interacts with PurQ and PurL and is thought to assist in the transfer of the ammonia molecule from PurQ to PurL. The sequence is that of Phosphoribosylformylglycinamidine synthase subunit PurL from Pyrobaculum aerophilum (strain ATCC 51768 / DSM 7523 / JCM 9630 / CIP 104966 / NBRC 100827 / IM2).